Here is a 329-residue protein sequence, read N- to C-terminus: Ketol-acid reductoisomerase (NADP(+)) (329 aa).

A KARI N-terminal Rossmann domain is found at 2-182 (TQLFYDTDAD…GGTRAGILET (181 aa)). NADP(+) contacts are provided by residues 25–28 (YGSQ), Ser-51, Ser-53, and 83–86 (DEFQ). His-108 is an active-site residue. Residue Gly-134 participates in NADP(+) binding. Positions 183–328 (NFKEETETDL…KGLRAMFSWL (146 aa)) constitute a KARI C-terminal knotted domain. Residues Asp-191, Glu-195, Glu-227, and Glu-231 each contribute to the Mg(2+) site. Residue Ser-252 participates in substrate binding.

It belongs to the ketol-acid reductoisomerase family. Mg(2+) is required as a cofactor.

It catalyses the reaction (2R)-2,3-dihydroxy-3-methylbutanoate + NADP(+) = (2S)-2-acetolactate + NADPH + H(+). The enzyme catalyses (2R,3R)-2,3-dihydroxy-3-methylpentanoate + NADP(+) = (S)-2-ethyl-2-hydroxy-3-oxobutanoate + NADPH + H(+). It participates in amino-acid biosynthesis; L-isoleucine biosynthesis; L-isoleucine from 2-oxobutanoate: step 2/4. It functions in the pathway amino-acid biosynthesis; L-valine biosynthesis; L-valine from pyruvate: step 2/4. In terms of biological role, involved in the biosynthesis of branched-chain amino acids (BCAA). Catalyzes an alkyl-migration followed by a ketol-acid reduction of (S)-2-acetolactate (S2AL) to yield (R)-2,3-dihydroxy-isovalerate. In the isomerase reaction, S2AL is rearranged via a Mg-dependent methyl migration to produce 3-hydroxy-3-methyl-2-ketobutyrate (HMKB). In the reductase reaction, this 2-ketoacid undergoes a metal-dependent reduction by NADPH to yield (R)-2,3-dihydroxy-isovalerate. This chain is Ketol-acid reductoisomerase (NADP(+)), found in Prochlorococcus marinus (strain MIT 9515).